The following is a 254-amino-acid chain: MSNNSKIIQMCVAGQRKKGWSDEQFAHEFTVVHAEITKATAEKAPALLGYRQVLAIPRPRISAFNMNNSTWDSQAVLTWSSIEELSSLLKSEGYRANAGNHVFTEPDIVGSISQVAGEFVFDPVGYSSQESRFMVFVYIPRATRSSRELVTEQEVAQRLDNITKIGAGTGLLRYVINRDVTPSDPSQLFDGTPFTNGDWGVMGVTEQYWFKDEDTASAFFADEARVDALMKVPSSLDGKSCVAVAGQETVLVSK.

Active-site residues include His-33 and Tyr-50.

It catalyses the reaction a chalcone = a flavanone.. Its pathway is secondary metabolite biosynthesis; flavonoid biosynthesis. Functionally, chalcone isomerase; part of the gene cluster that mediates the biosynthesis of chlorflavonin, a fungal flavonoid with acetolactate synthase inhibitory activity. Within the pathway, cfoK acts as chalcone isomerase (CHI), the key enzyme responsible for the tricyclic formation of flavanone through Michael-type intramolecular cyclization of chalcone. The hydrogen at C2'-OH is extracted by the imidazole ring of His-33, which induces the oxa-Michael addition to form the intermediate enolate through 6-endo-trig mode cyclization. The enolate can then be stabilized by a hydrogen bond with the Tyr-50 residue. Following enol tautomerization, the C ring, a gamma-pyranone ring, is formed. The pathway begins with the PKS-NRPS hybrid synthetase cfoA that uses benzoic acid or p-hydroxybenzoic acid as a starter unit with four rounds of chain elongation using malonyl-CoA to form the chalcone skeleton. Then, a new type of chalcone isomerase, cfoK, catalyzes the conversion of the chalcone into a flavanone by a histidine-mediated oxa-Michael addition mechanism. The desaturation of flavanone to flavone is catalyzed by a new type of flavone synthase, the flavin mononucleotide (FMN)-dependent oxidoreductase cfoJ. Monooxygenases cfoF, cfoG, and P450 cfoH are responsible for the hydroxylation of the flavonoid skeleton at sites C3, C8, and C2', respectively. Like cfoF, the dehydratase cfoI plays also a role in the hydroxylation of position C3. Methyltransferases cfoB, cfoC, and cfoD then catalyze the methylation of C7-OH, C8-OH, and C3-OH, respectively. Finally, the monooxygenase cfoE is responsible for the chlorination of flavonoid at position C3'. The protein is Chalcone isomerase cfoK of Aspergillus candidus.